Consider the following 369-residue polypeptide: Anhydro-N-acetylmuramic acid kinase (369 aa).

ATP is bound at residue 12-19 (GTSMDGVD).

The protein belongs to the anhydro-N-acetylmuramic acid kinase family.

It catalyses the reaction 1,6-anhydro-N-acetyl-beta-muramate + ATP + H2O = N-acetyl-D-muramate 6-phosphate + ADP + H(+). It functions in the pathway amino-sugar metabolism; 1,6-anhydro-N-acetylmuramate degradation. The protein operates within cell wall biogenesis; peptidoglycan recycling. Catalyzes the specific phosphorylation of 1,6-anhydro-N-acetylmuramic acid (anhMurNAc) with the simultaneous cleavage of the 1,6-anhydro ring, generating MurNAc-6-P. Is required for the utilization of anhMurNAc either imported from the medium or derived from its own cell wall murein, and thus plays a role in cell wall recycling. This Shewanella putrefaciens (strain CN-32 / ATCC BAA-453) protein is Anhydro-N-acetylmuramic acid kinase.